The sequence spans 299 residues: Recombination-associated protein RdgC (299 aa).

This sequence belongs to the RdgC family.

Its subcellular location is the cytoplasm. The protein localises to the nucleoid. Its function is as follows. May be involved in recombination. This chain is Recombination-associated protein RdgC, found in Cupriavidus pinatubonensis (strain JMP 134 / LMG 1197) (Cupriavidus necator (strain JMP 134)).